Reading from the N-terminus, the 461-residue chain is Putative aldehyde dehydrogenase FUS7 (461 aa).

220-225 (GSTTTG) serves as a coordination point for NAD(+). Catalysis depends on residues glutamate 242 and cysteine 276.

The protein belongs to the aldehyde dehydrogenase family.

It carries out the reaction an aldehyde + NAD(+) + H2O = a carboxylate + NADH + 2 H(+). Its function is as follows. Putative aldehyde dehydrogenase; part of the gene cluster that mediates the biosynthesis of the mycotoxin fusarin C. Within the cluster, FUS1, FUS2, FUS8 and FUS9 are sufficient for fusarin production. The other FUS cluster members are not essential for fusarin C biosynthesis. The polypeptide is Putative aldehyde dehydrogenase FUS7 (Gibberella fujikuroi (strain CBS 195.34 / IMI 58289 / NRRL A-6831) (Bakanae and foot rot disease fungus)).